A 172-amino-acid polypeptide reads, in one-letter code: S-ribosylhomocysteine lyase (172 aa).

Histidine 54, histidine 58, and cysteine 128 together coordinate Fe cation.

This sequence belongs to the LuxS family. As to quaternary structure, homodimer. Fe cation serves as cofactor.

The catalysed reaction is S-(5-deoxy-D-ribos-5-yl)-L-homocysteine = (S)-4,5-dihydroxypentane-2,3-dione + L-homocysteine. Involved in the synthesis of autoinducer 2 (AI-2) which is secreted by bacteria and is used to communicate both the cell density and the metabolic potential of the environment. The regulation of gene expression in response to changes in cell density is called quorum sensing. Catalyzes the transformation of S-ribosylhomocysteine (RHC) to homocysteine (HC) and 4,5-dihydroxy-2,3-pentadione (DPD). This chain is S-ribosylhomocysteine lyase, found in Vibrio atlanticus (strain LGP32) (Vibrio splendidus (strain Mel32)).